Here is a 59-residue protein sequence, read N- to C-terminus: UPF0434 protein VIBHAR_01537 (59 aa).

Belongs to the UPF0434 family.

This is UPF0434 protein VIBHAR_01537 from Vibrio campbellii (strain ATCC BAA-1116).